We begin with the raw amino-acid sequence, 1119 residues long: Multiple epidermal growth factor-like domains protein 10 (1119 aa).

The N-terminal stretch at 1-22 (MMSSCGPLLLAVSCCLVALTSS) is a signal peptide. Topologically, residues 23–851 (LNLDDPNVCS…ALPMDSYQIG (829 aa)) are extracellular. Residues 27–104 (DPNVCSHWES…FYESGDICVP (78 aa)) enclose the EMI domain. Cystine bridges form between Cys31-Cys92, Cys57-Cys66, Cys91-Cys102, Cys102-Cys115, Cys106-Cys121, Cys123-Cys132, Cys145-Cys157, Cys151-Cys164, Cys166-Cys175, Cys188-Cys200, Cys194-Cys207, Cys209-Cys218, Cys231-Cys243, Cys237-Cys250, and Cys252-Cys260. EGF-like domains are found at residues 98-133 (SGDI…ADCS), 141-176 (WGPH…WRCE), 184-219 (YGNN…AFCE), and 227-261 (HGQQ…MVCG). A glycan (N-linked (GlcNAc...) asparagine) is linked at Asn197. The N-linked (GlcNAc...) asparagine glycan is linked to Asn272. 2 consecutive EGF-like domains span residues 274-304 (SQEC…ERCQ) and 312-347 (YGIG…ESCE). 6 disulfide bridges follow: Cys277–Cys285, Cys279–Cys292, Cys294–Cys303, Cys316–Cys328, Cys322–Cys335, and Cys337–Cys346. 2 N-linked (GlcNAc...) asparagine glycosylation sites follow: Asn369 and Asn393. 9 consecutive EGF-like domains span residues 401 to 436 (YGEA…SDCA), 444 to 479 (YGIN…VDCS), 487 to 522 (WGLG…DRCD), 573 to 608 (WGPN…TTCQ), 616 to 653 (FGHR…ALCN), 666 to 696 (GGSC…SDCS), 709 to 739 (IHTC…LYCT), 747 to 782 (YGKD…RHCE), and 795 to 825 (RQVC…TRCD). 3 cysteine pairs are disulfide-bonded: Cys405/Cys417, Cys411/Cys424, and Cys426/Cys435. Asn447 carries an N-linked (GlcNAc...) asparagine glycan. Cystine bridges form between Cys448–Cys460, Cys454–Cys467, Cys469–Cys478, Cys491–Cys503, Cys497–Cys510, and Cys512–Cys521. A glycan (N-linked (GlcNAc...) asparagine) is linked at Asn492. A glycan (N-linked (GlcNAc...) asparagine) is linked at Asn576. 18 cysteine pairs are disulfide-bonded: Cys577–Cys589, Cys583–Cys596, Cys598–Cys607, Cys620–Cys634, Cys624–Cys641, Cys643–Cys652, Cys669–Cys677, Cys671–Cys684, Cys686–Cys695, Cys712–Cys720, Cys714–Cys727, Cys729–Cys738, Cys751–Cys763, Cys757–Cys770, Cys772–Cys781, Cys798–Cys806, Cys800–Cys813, and Cys815–Cys824. Asn674 carries N-linked (GlcNAc...) asparagine glycosylation. Residue Asn803 is glycosylated (N-linked (GlcNAc...) asparagine). The helical transmembrane segment at 852 to 872 (AITGIIILVLLVLILLLLFII) threads the bilayer. Topologically, residues 873-1119 (YRKKQKGKES…SSPSPTEDSK (247 aa)) are cytoplasmic.

The protein belongs to the MEGF family.

The protein resides in the cell membrane. In terms of biological role, membrane receptor involved in phagocytosis by macrophages and astrocytes of apoptotic cells. Essential factor in the regulation of muscle development including myogenesis. Likely plays a key role in muscle cell proliferation, adhesion and motility. May control the balance between skeletal muscle satellite cells proliferation and differentiation through regulation of the notch signaling pathway. In Danio rerio (Zebrafish), this protein is Multiple epidermal growth factor-like domains protein 10.